The following is a 920-amino-acid chain: MNLLNLKNTLQTSLVIRLTFLFLLTTIIIWLLSVLTAAYISMVQKRQHIIEDLSVLSEMNIVLSNQRFEEAERDAKNLMYQCSLATEIHHNDIFPEVSRHLSVGPSNCTPTLNGEKHRLFLQSSDIDENSFRRDSFILNHKNEISLLSTDNPSDYSTLQPLTRKSFPLYPTHAGFYWSEPEYINGKGWHASVAVADQQGVFFEVTVKLPDLITKSHLPLDDSIRVWLDQNNHLLPFSYIPQKIRTQLENVTLHDGWQQIPGFLILRTTLHGPGWSLVTLYPYGNLHNRILKIILQQIPFTLTALVLMTSAFCWLLHRSLAKPLWRFVDVINKTATAPLSTRLPAQRLDELDSIAGAFNQLLDTLQVQYDNLENKVAERTQALNEAKKRAERANKRKSIHLTVISHELRTPMNGVLGAIELLQTTPLNIEQQGLADTARNCTLSLLAIINNLLDFSRIESGHFTLHMEETALLPLLDQAMQTIQGPAQSKKLSLRTFVGQHVPLYFHTDSIRLRQILVNLLGNAVKFTETGGIRLTVKRHEEQLIFLVSDSGKGIEIQQQSQIFTAFYQADTNSQGTGIGLTIASSLAKMMGGNLTLKSVPGVGTCVSLVLPLQEYQPPQPIKGTLSAPFCLHRQLACWGIRGEPPHQQNALLNAELLYFSGKLYDLAQQLILCTPNMPVINNLLPPWQLQILLVDDADINRDIIGKMLVSLGQHVTIAASSNEALTLSQQQRFDLVLIDIRMPEIDGIECVRLWHDEPNNLDPDCMFVALSASVATEDIHRCKKNGIHHYITKPVTLATLARYISIAAEYQLLRNIELQEQDPSRCSALLATDDMVINSKIFQSLDLLLADIENAVSAGEKIDQLIHTLKGCLGQIGQTELVCYVIDIENRVKMGKIIALEELTDLRQKIRMIFKNYTIT.

The Cytoplasmic segment spans residues 1-19 (MNLLNLKNTLQTSLVIRLT). Residues 20-40 (FLFLLTTIIIWLLSVLTAAYI) form a helical membrane-spanning segment. At 41 to 291 (SMVQKRQHII…YGNLHNRILK (251 aa)) the chain is on the periplasmic side. The chain crosses the membrane as a helical span at residues 292 to 312 (IILQQIPFTLTALVLMTSAFC). Residues 313–920 (WLLHRSLAKP…RMIFKNYTIT (608 aa)) are Cytoplasmic-facing. One can recognise an HAMP domain in the interval 317–369 (RSLAKPLWRFVDVINKTATAPLSTRLPAQRLDELDSIAGAFNQLLDTLQVQYD). Residues 354–395 (AGAFNQLLDTLQVQYDNLENKVAERTQALNEAKKRAERANKR) are a coiled coil. Residues 402–614 (VISHELRTPM…CVSLVLPLQE (213 aa)) form the Histidine kinase domain. Positions 405 and 549 each coordinate ATP. H405 is modified (phosphohistidine; by autocatalysis). A Response regulatory domain is found at 690 to 808 (QILLVDDADI…TLARYISIAA (119 aa)). D739 carries the 4-aspartylphosphate modification.

In terms of processing, autophosphorylated.

The protein localises to the cell inner membrane. It catalyses the reaction ATP + protein L-histidine = ADP + protein N-phospho-L-histidine.. In terms of biological role, member of the two-component regulatory system SsrA/SsrB (SpiR/SsrB) that is required for intracellular proliferation and systemic dissemination within the host. When inside acidic Salmonella-containing vesicles (SCV) within host cells the SsrA sensor kinase autophosphorylates and the phosphoryl group is transferred to the response regulator SsrB; phosphorylated SsrB activates the expression of genes encoding virulence proteins, including pathogenicity island 2 (SPI2) and other horizontally acquired genes, and antagonizes the action of transcriptional repressor hns (H-NS). This Salmonella typhimurium (strain LT2 / SGSC1412 / ATCC 700720) protein is Sensor histidine kinase SsrA.